The chain runs to 308 residues: Cap-specific mRNA (nucleoside-2'-O-)-methyltransferase (308 aa).

MRNA is bound at residue Tyr-30. S-adenosyl-L-methionine is bound by residues Gln-46, Tyr-74, Gly-76, Gly-80, Asp-103, Arg-105, Val-124, and Asp-147. The interval 177–257 (PIASSLKWRC…NTKIRPKIVL (81 aa)) is binding to NPH-I. Lys-183 (for methyltransferase activity) is an active-site residue. Residues 185-188 (RCPF), Asp-190, 213-215 (SAE), and Glu-241 each bind mRNA.

It belongs to the class I-like SAM-binding methyltransferase superfamily. Poxvirus/kinetoplastid 2'-O-MTase family. Interacts with poly(A) polymerase catalytic subunit OPG063. Interacts with OPG109 and OPG123; these interactions might help linking transcription to capping and polyadenylation.

The protein localises to the virion. It catalyses the reaction a 5'-end (N(7)-methyl 5'-triphosphoguanosine)-ribonucleoside in mRNA + S-adenosyl-L-methionine = a 5'-end (N(7)-methyl 5'-triphosphoguanosine)-(2'-O-methyl-ribonucleoside) in mRNA + S-adenosyl-L-homocysteine + H(+). Functionally, displays methyltransferase, positive regulation of the poly(A) polymerase and transcription elongation activities. Involved in the modification of both mRNA ends and in intermediate and late gene positive transcription elongation. At the mRNAs 5' end, methylates the ribose 2' OH group of the first transcribed nucleotide, thereby producing a 2'-O-methylpurine cap. At the 3' end, functions as a processivity factor which stimulates the activity of the viral poly(A) polymerase OPG063 that creates mRNA's poly(A) tail. In the presence of OPG102, OPG063 does not dissociate from the RNA allowing tail elongation to around 250 adenylates. This is Cap-specific mRNA (nucleoside-2'-O-)-methyltransferase (OPG102) from Fowlpox virus (strain NVSL) (FPV).